Reading from the N-terminus, the 559-residue chain is 2-isopropylmalate synthase (559 aa).

The region spanning 30 to 304 is the Pyruvate carboxyltransferase domain; the sequence is PLWAAVDLRD…DPGIDFSRMK (275 aa). The Mg(2+) site is built by Asp39, His243, His245, and Asn279. Residues 436 to 559 are regulatory domain; it reads VPMGWVLRSY…ETSEQLIANS (124 aa).

The protein belongs to the alpha-IPM synthase/homocitrate synthase family. LeuA type 2 subfamily. As to quaternary structure, homodimer. Mg(2+) is required as a cofactor.

It localises to the cytoplasm. The catalysed reaction is 3-methyl-2-oxobutanoate + acetyl-CoA + H2O = (2S)-2-isopropylmalate + CoA + H(+). The protein operates within amino-acid biosynthesis; L-leucine biosynthesis; L-leucine from 3-methyl-2-oxobutanoate: step 1/4. Catalyzes the condensation of the acetyl group of acetyl-CoA with 3-methyl-2-oxobutanoate (2-ketoisovalerate) to form 3-carboxy-3-hydroxy-4-methylpentanoate (2-isopropylmalate). The polypeptide is 2-isopropylmalate synthase (Alcanivorax borkumensis (strain ATCC 700651 / DSM 11573 / NCIMB 13689 / SK2)).